Consider the following 1562-residue polypeptide: Neuralized-like protein 4 (1562 aa).

Residues methionine 1–glycine 42 are compositionally biased toward gly residues. 2 disordered regions span residues methionine 1–threonine 48 and proline 207–glutamine 236. NHR domains lie at glycine 41 to proline 207 and alanine 317 to asparagine 484. Over residues proline 207–proline 224 the composition is skewed to pro residues. Serine 502 carries the post-translational modification Phosphoserine. NHR domains are found at residues arginine 520–aspartate 686 and aspartate 716–alanine 884. Residues proline 691 to aspartate 716 are disordered. Phosphoserine is present on serine 907. Residues alanine 913–serine 1086 enclose the NHR 5 domain. The interval serine 1086–asparagine 1123 is disordered. A compositionally biased stretch (acidic residues) spans serine 1106–glutamate 1115. Positions threonine 1131–proline 1294 constitute an NHR 6 domain.

In terms of assembly, interacts with CCP110; this interaction propmotes CCP110 ubiquitination and degradation via the proteasome pathway. Via its interaction with CCP110, may indirectly interact with CEP97. Interacts with the E3 ubiquitin-protein ligase HERC2 and UBE3A. May interact with MAPK6 and hence mediate MAPK6 interaction with UBE3A. Interaction with UBE3A may be indirect and mediated by HERC2. In terms of processing, ubiquitinated; undergoes HERC2-dependent 'Lys-48' ubiquitination. This ubiquitination leads to proteasomal degradation. As to expression, widely expressed at high levels (including brain).

It localises to the cytoplasm. Its subcellular location is the cytoskeleton. It is found in the microtubule organizing center. The protein localises to the centrosome. The protein resides in the centriole. In terms of biological role, promotes CCP110 ubiquitination and proteasome-dependent degradation. By counteracting accumulation of CP110, maintains normal centriolar homeostasis and preventing formation of ectopic microtubular organizing centers. The protein is Neuralized-like protein 4 (NEURL4) of Homo sapiens (Human).